A 215-amino-acid polypeptide reads, in one-letter code: Large ribosomal subunit protein uL1 (215 aa).

It belongs to the universal ribosomal protein uL1 family. Part of the 50S ribosomal subunit.

Functionally, binds directly to 23S rRNA. Probably involved in E site tRNA release. Its function is as follows. Protein L1 is also a translational repressor protein, it controls the translation of its operon by binding to its mRNA. The polypeptide is Large ribosomal subunit protein uL1 (Archaeoglobus fulgidus (strain ATCC 49558 / DSM 4304 / JCM 9628 / NBRC 100126 / VC-16)).